Here is a 355-residue protein sequence, read N- to C-terminus: UDP-N-acetylglucosamine--N-acetylmuramyl-(pentapeptide) pyrophosphoryl-undecaprenol N-acetylglucosamine transferase (355 aa).

UDP-N-acetyl-alpha-D-glucosamine-binding positions include 15–17, Asn-127, Arg-163, Ser-191, Ile-244, 263–268, and Gln-288; these read TGG and ALTVSE.

This sequence belongs to the glycosyltransferase 28 family. MurG subfamily.

It localises to the cell inner membrane. The enzyme catalyses di-trans,octa-cis-undecaprenyl diphospho-N-acetyl-alpha-D-muramoyl-L-alanyl-D-glutamyl-meso-2,6-diaminopimeloyl-D-alanyl-D-alanine + UDP-N-acetyl-alpha-D-glucosamine = di-trans,octa-cis-undecaprenyl diphospho-[N-acetyl-alpha-D-glucosaminyl-(1-&gt;4)]-N-acetyl-alpha-D-muramoyl-L-alanyl-D-glutamyl-meso-2,6-diaminopimeloyl-D-alanyl-D-alanine + UDP + H(+). It functions in the pathway cell wall biogenesis; peptidoglycan biosynthesis. Cell wall formation. Catalyzes the transfer of a GlcNAc subunit on undecaprenyl-pyrophosphoryl-MurNAc-pentapeptide (lipid intermediate I) to form undecaprenyl-pyrophosphoryl-MurNAc-(pentapeptide)GlcNAc (lipid intermediate II). In Sodalis glossinidius (strain morsitans), this protein is UDP-N-acetylglucosamine--N-acetylmuramyl-(pentapeptide) pyrophosphoryl-undecaprenol N-acetylglucosamine transferase.